We begin with the raw amino-acid sequence, 57 residues long: MCSCNLYFNGELVMEDVMIVEKKGDKVIAIDLFGDKKEFVGEIKKIDLNENKIFIEG.

This is an uncharacterized protein from Methanocaldococcus jannaschii (strain ATCC 43067 / DSM 2661 / JAL-1 / JCM 10045 / NBRC 100440) (Methanococcus jannaschii).